Reading from the N-terminus, the 321-residue chain is Isoaspartyl peptidase (321 aa).

T179 serves as the catalytic Nucleophile. Residues 207 to 210 (RVGD) and 230 to 233 (TGTG) contribute to the substrate site.

This sequence belongs to the Ntn-hydrolase family. Heterotetramer of two alpha and two beta chains arranged as a dimer of alpha/beta heterodimers. In terms of processing, autocleaved. Generates the alpha and beta subunits. The N-terminal residue of the beta subunit is thought to be responsible for the nucleophile hydrolase activity. Post-translationally, both subunits undergo further processing at their C-termini. The overexpressed alpha subunit seems to consist of residues 2-161, with an oxidized Met residue and a tightly coordinated Na(+), whereas the overexpressed beta subunit is processed to residue 315 and has 3 oxidized Met residues. Processing of the alpha subunit is inhibited by Zn(2+).

It catalyses the reaction Cleavage of a beta-linked Asp residue from the N-terminus of a polypeptide.. Its function is as follows. Degrades proteins damaged by L-isoaspartyl residue formation (also known as beta-Asp residues). Degrades L-isoaspartyl-containing di- and maybe also tripeptides. Also has L-asparaginase activity, although this may not be its principal function. May be involved in glutathione, and possibly other peptide, transport, although these results could also be due to polar effects of disruption. The sequence is that of Isoaspartyl peptidase (iaaA) from Escherichia coli (strain K12).